Here is a 240-residue protein sequence, read N- to C-terminus: DNA repair protein RecO (240 aa).

This sequence belongs to the RecO family.

Involved in DNA repair and RecF pathway recombination. The chain is DNA repair protein RecO from Actinobacillus pleuropneumoniae serotype 3 (strain JL03).